A 436-amino-acid chain; its full sequence is MSNFSPREIVSELDRYIIGQKEAKRAVAIALRNRWRRQQLEPGLREEVMPKNILMIGPTGVGKTEISRRLAKLAGAPFVKVEATKFTEVGYVGRDVEQIVRDLVEVAIALTREKMREGVEARAHLNAEERVLEALVGRTASPATRDSFRQKLRSGELDDKEIEIQVADAGGGMGSFEIPGMPGANIGVLNINDMLQKAMGGGRTKTVKTTVKDSYKFLINDESDKLLDQDEVVRRALSSAENDGIVFIDEIDKIASREGGMGAGVSREGVQRDLLPLVEGTTVATKYGPVKTDHVLFIASGAFHVAKPSDLLPELQGRLPIRVELRALEKEDFRRILTETEASLIKQYIALMETEGVELEFTEDAIVRLAEVAVDLNASVENIGARRLQTVMERVLDEISYNAPDRSGSKMVIDAAYVDQHVGDLAKNTDLSRFIL.

Residues I18, 60–65, D249, E314, and R386 contribute to the ATP site; that span reads GVGKTE.

Belongs to the ClpX chaperone family. HslU subfamily. A double ring-shaped homohexamer of HslV is capped on each side by a ring-shaped HslU homohexamer. The assembly of the HslU/HslV complex is dependent on binding of ATP.

It is found in the cytoplasm. Its function is as follows. ATPase subunit of a proteasome-like degradation complex; this subunit has chaperone activity. The binding of ATP and its subsequent hydrolysis by HslU are essential for unfolding of protein substrates subsequently hydrolyzed by HslV. HslU recognizes the N-terminal part of its protein substrates and unfolds these before they are guided to HslV for hydrolysis. This Chelativorans sp. (strain BNC1) protein is ATP-dependent protease ATPase subunit HslU.